The following is a 497-amino-acid chain: Probable cytosol aminopeptidase (497 aa).

Mn(2+) is bound by residues K263 and D268. K275 is an active-site residue. Positions 286, 345, and 347 each coordinate Mn(2+). R349 is an active-site residue.

Belongs to the peptidase M17 family. Mn(2+) serves as cofactor.

The protein localises to the cytoplasm. It carries out the reaction Release of an N-terminal amino acid, Xaa-|-Yaa-, in which Xaa is preferably Leu, but may be other amino acids including Pro although not Arg or Lys, and Yaa may be Pro. Amino acid amides and methyl esters are also readily hydrolyzed, but rates on arylamides are exceedingly low.. It catalyses the reaction Release of an N-terminal amino acid, preferentially leucine, but not glutamic or aspartic acids.. Its function is as follows. Presumably involved in the processing and regular turnover of intracellular proteins. Catalyzes the removal of unsubstituted N-terminal amino acids from various peptides. The polypeptide is Probable cytosol aminopeptidase (Allorhizobium ampelinum (strain ATCC BAA-846 / DSM 112012 / S4) (Agrobacterium vitis (strain S4))).